Reading from the N-terminus, the 410-residue chain is Transcription factor rglT (410 aa).

The tract at residues 1-24 is disordered; that stretch reads MQFDSLPLPPSSSHDTTSVPPLKR. Positions 28-55 form a DNA-binding region, zn(2)-C6 fungal-type; it reads CDECRKRKLKCSGEATGCSRCLKQSLPC. The interval 353–372 is disordered; sequence HRTRTVESPNEPGSCSPVSH. Residues 358-369 show a composition bias toward polar residues; that stretch reads VESPNEPGSCSP.

It localises to the nucleus. Its function is as follows. Transcription factor that is involved in protection against oxidative stress. Binds to promoter regions of the gliotoxin (GT) biosynthetic genes gliZ, gliF, gliT, gliM, gliA and gtmA. Two related but different DNA motifs (5'-TCGG-3' and 5'-CGGNCGG-3') are specifically enriched among rglT binding sites in GT-inducing conditions. Also indirectly regulates the expression of gliP, gliG, gliH and gliN. Plays a key role in resistance against exogenously-added GT and GT biosynthesis, mainly through the direct regulation of gliT. Furthermore, rglT is important for virulence in chemotherapeutic mice with invasive pulmonary aspergillosis (IPA). The sequence is that of Transcription factor rglT from Aspergillus fumigatus (strain CBS 144.89 / FGSC A1163 / CEA10) (Neosartorya fumigata).